The chain runs to 423 residues: Glycine amidinotransferase, mitochondrial (423 aa).

Residues 1–48 (MLRVRCLRGGSRGAEAVHYIGSRLGRTLTGWVQRTFQSTQAATASSRN) constitute a mitochondrion transit peptide. A compositionally biased stretch (low complexity) spans 39–51 (TQAATASSRNSSA). Residues 39–65 (TQAATASSRNSSAADDKATEPLPKDCP) form a disordered region. Phosphoserine is present on residues Ser-46 and Ser-49. Residues 52–61 (ADDKATEPLP) are compositionally biased toward basic and acidic residues. Arginine is bound at residue Asp-170. Catalysis depends on residues Asp-254 and His-303. Residues Asp-305, Arg-322, Ser-354, and Ser-355 each contribute to the arginine site. An N6-acetyllysine modification is found at Lys-385. Catalysis depends on Cys-407, which acts as the Amidino-cysteine intermediate.

It belongs to the amidinotransferase family. As to quaternary structure, homodimer.

The protein localises to the mitochondrion inner membrane. It carries out the reaction L-arginine + glycine = guanidinoacetate + L-ornithine. The enzyme catalyses 4-aminobutanoate + L-arginine = 4-guanidinobutanoate + L-ornithine. The catalysed reaction is beta-alanine + L-arginine = 3-guanidinopropanoate + L-ornithine. It catalyses the reaction taurine + L-arginine = taurocyamine + L-ornithine. It participates in amine and polyamine biosynthesis; creatine biosynthesis; creatine from L-arginine and glycine: step 1/2. Its function is as follows. Transamidinase that catalyzes the transfer of the amidino group of L-arginine onto the amino moiety of acceptor metabolites such as glycine, beta-alanine, gamma-aminobutyric acid (GABA) and taurine yielding the corresponding guanidine derivatives. Catalyzes the rate-limiting step of creatine biosynthesis, namely the transfer of the amidino group from L-arginine to glycine to generate guanidinoacetate, which is then methylated by GAMT to form creatine. Provides creatine as a source for ATP generation in tissues with high energy demands, in particular skeletal muscle, heart and brain. In Pongo abelii (Sumatran orangutan), this protein is Glycine amidinotransferase, mitochondrial (GATM).